A 95-amino-acid polypeptide reads, in one-letter code: Protein TusB (95 aa).

This sequence belongs to the DsrH/TusB family. Heterohexamer, formed by a dimer of trimers. The hexameric TusBCD complex contains 2 copies each of TusB, TusC and TusD. The TusBCD complex interacts with TusE.

It localises to the cytoplasm. In terms of biological role, part of a sulfur-relay system required for 2-thiolation of 5-methylaminomethyl-2-thiouridine (mnm(5)s(2)U) at tRNA wobble positions. This Photorhabdus laumondii subsp. laumondii (strain DSM 15139 / CIP 105565 / TT01) (Photorhabdus luminescens subsp. laumondii) protein is Protein TusB.